Reading from the N-terminus, the 369-residue chain is Cyclin-dependent kinase 5 activator 2 (369 aa).

A compositionally biased stretch (polar residues) spans 1 to 11; the sequence is MGTVLSLSPAS. Disordered regions lie at residues 1–55, 72–176, and 330–369; these read MGTV…SRLK, ASAK…SPRR, and EAAA…NLDR. G2 carries the N-myristoyl glycine lipid modification. A compositionally biased stretch (basic residues) spans 74 to 84; it reads AKKKKGSKKVT. Phosphothreonine is present on T84. Residues 99–112 show a composition bias toward basic and acidic residues; the sequence is RNRENLLRKGRDGP. A compositionally biased stretch (low complexity) spans 122 to 144; the sequence is AVPVPTVPTTAATCEPPSGGSAA. Residues 145 to 171 show a composition bias toward pro residues; the sequence is APPPGSGGGKPPPPPPPAPQAAPPAPG. The span at 331–352 shows a compositional bias: low complexity; the sequence is AAASTGGPPSGSSASTTSSSSA.

It belongs to the cyclin-dependent kinase 5 activator family. Heterodimer of a catalytic subunit and a regulatory subunit. In terms of processing, myristoylated. The Gly-2-Ala mutant is absent of the cell periphery, suggesting that a proper myristoylation signal is essential for the proper distribution of CDK5R2 (p39).

The protein resides in the cell membrane. In terms of biological role, activator of CDK5/TPKII. This Mus musculus (Mouse) protein is Cyclin-dependent kinase 5 activator 2 (Cdk5r2).